The sequence spans 101 residues: Urease subunit beta (101 aa).

The protein belongs to the urease beta subunit family. As to quaternary structure, heterotrimer of UreA (gamma), UreB (beta) and UreC (alpha) subunits. Three heterotrimers associate to form the active enzyme.

It localises to the cytoplasm. It catalyses the reaction urea + 2 H2O + H(+) = hydrogencarbonate + 2 NH4(+). It participates in nitrogen metabolism; urea degradation; CO(2) and NH(3) from urea (urease route): step 1/1. The chain is Urease subunit beta from Ectopseudomonas mendocina (strain ymp) (Pseudomonas mendocina).